Reading from the N-terminus, the 297-residue chain is Protoheme IX farnesyltransferase (297 aa).

9 consecutive transmembrane segments (helical) span residues valine 23–proline 43, valine 49–isoleucine 69, isoleucine 93–leucine 113, leucine 117–leucine 137, asparagine 144–alanine 164, alanine 171–leucine 191, arginine 215–isoleucine 235, serine 238–tryptophan 258, and phenylalanine 275–leucine 295.

Belongs to the UbiA prenyltransferase family. Protoheme IX farnesyltransferase subfamily.

Its subcellular location is the cell inner membrane. The catalysed reaction is heme b + (2E,6E)-farnesyl diphosphate + H2O = Fe(II)-heme o + diphosphate. Its pathway is porphyrin-containing compound metabolism; heme O biosynthesis; heme O from protoheme: step 1/1. Its function is as follows. Converts heme B (protoheme IX) to heme O by substitution of the vinyl group on carbon 2 of heme B porphyrin ring with a hydroxyethyl farnesyl side group. The polypeptide is Protoheme IX farnesyltransferase (Bordetella pertussis (strain Tohama I / ATCC BAA-589 / NCTC 13251)).